A 554-amino-acid chain; its full sequence is DnaJ homolog subfamily C member 1 (554 aa).

A signal peptide spans 1–47; sequence MTAPCSQPAQLPGRRQLGLVPFPPPPPRTPLLWLLLLLLAAVAPARG. Residues 48–153 lie on the Lumenal side of the membrane; that stretch reads WESGDLELFD…RRVRKMSNAE (106 aa). Residues 65-129 enclose the J domain; the sequence is NFYQFLGVQQ…ERRQRYDDIL (65 aa). Residues 154–174 traverse the membrane as a helical segment; that stretch reads LALLLFIILTVGHYAVVWSIY. Residues 175–554 are Cytoplasmic-facing; the sequence is LEKQLDELLS…LVQKKKQAKS (380 aa). Residues 325-379 enclose the SANT 1 domain; it reads KQAPEWTEEDLSQLTRSMVKFPGGTPGRWEKIAHELGRSVTDVTTKAKQLKDSVT. Position 381 is a phosphoserine (S381). Residues 392-405 are compositionally biased toward polar residues; the sequence is STVQNSRPIKTATT. Positions 392–500 are disordered; it reads STVQNSRPIK…RSAEEPWTQN (109 aa). Residues 421–432 show a composition bias toward acidic residues; that stretch reads AAEEEQEGDSGE. S430 carries the phosphoserine modification. Basic and acidic residues predominate over residues 455-472; sequence AKPEPEEKSRAKRQKDFD. Residues 473–482 are compositionally biased toward acidic residues; it reads IAEQNESSDE. A phosphoserine mark is found at S479, S480, S484, and S492. Residues 483–494 show a composition bias toward basic and acidic residues; it reads ESLRKERARSAE. Residues 492–547 enclose the SANT 2 domain; that stretch reads SAEEPWTQNQQKLLELALQQYPRGSSDRWDKIARCVPSKSKEDCIARYKLLVELVQ.

Interacts (via J domain) with HSPA5. Interacts (via cytosolic domain) with ribosomes. Interacts (via SANT 2 domain) with SERPINA3; the interaction delays the formation of the covalent inhibitory complex SERPINA3-chymotrypsin, but does not alter the catalytic activity of SERPINA3. Interacts (via SANT 2 domain) with ITIH4 (via C-terminus); the interaction protects ITIH4 against in vitro cleavage by kallikrein.

The protein localises to the endoplasmic reticulum membrane. Its subcellular location is the nucleus membrane. It is found in the microsome membrane. May modulate protein synthesis. This Homo sapiens (Human) protein is DnaJ homolog subfamily C member 1 (DNAJC1).